The primary structure comprises 660 residues: DNA mismatch repair protein MutL (660 aa).

The segment at 414–433 (SSVKHASRPQNTFTETDHPN) is disordered.

Belongs to the DNA mismatch repair MutL/HexB family.

Its function is as follows. This protein is involved in the repair of mismatches in DNA. It is required for dam-dependent methyl-directed DNA mismatch repair. May act as a 'molecular matchmaker', a protein that promotes the formation of a stable complex between two or more DNA-binding proteins in an ATP-dependent manner without itself being part of a final effector complex. This is DNA mismatch repair protein MutL from Streptococcus pyogenes serotype M5 (strain Manfredo).